The chain runs to 393 residues: S-adenosylmethionine synthase (393 aa).

An ATP-binding site is contributed by H16. Residue D18 coordinates Mg(2+). Residue E44 participates in K(+) binding. Positions 57 and 100 each coordinate L-methionine. The interval 100 to 110 is flexible loop; that stretch reads QSNDIAQGVDH. ATP-binding positions include 167 to 169, 238 to 239, D247, 253 to 254, A270, and K274; these read DAK, RF, and RK. Residue D247 participates in L-methionine binding. K278 is an L-methionine binding site.

Belongs to the AdoMet synthase family. As to quaternary structure, homotetramer; dimer of dimers. Requires Mg(2+) as cofactor. K(+) is required as a cofactor.

It is found in the cytoplasm. The catalysed reaction is L-methionine + ATP + H2O = S-adenosyl-L-methionine + phosphate + diphosphate. It participates in amino-acid biosynthesis; S-adenosyl-L-methionine biosynthesis; S-adenosyl-L-methionine from L-methionine: step 1/1. Catalyzes the formation of S-adenosylmethionine (AdoMet) from methionine and ATP. The overall synthetic reaction is composed of two sequential steps, AdoMet formation and the subsequent tripolyphosphate hydrolysis which occurs prior to release of AdoMet from the enzyme. The chain is S-adenosylmethionine synthase from Variovorax paradoxus (strain S110).